A 209-amino-acid polypeptide reads, in one-letter code: Chaperone protein TorD (209 aa).

It belongs to the TorD/DmsD family. TorD subfamily.

The protein resides in the cytoplasm. Involved in the biogenesis of TorA. Acts on TorA before the insertion of the molybdenum cofactor and, as a result, probably favors a conformation of the apoenzyme that is competent for acquiring the cofactor. This Shewanella sp. (strain MR-4) protein is Chaperone protein TorD.